The following is a 294-amino-acid chain: Bifunctional protein FolD (294 aa).

Residues 175 to 177 and I241 contribute to the NADP(+) site; that span reads GAS.

Belongs to the tetrahydrofolate dehydrogenase/cyclohydrolase family. Homodimer.

It carries out the reaction (6R)-5,10-methylene-5,6,7,8-tetrahydrofolate + NADP(+) = (6R)-5,10-methenyltetrahydrofolate + NADPH. The enzyme catalyses (6R)-5,10-methenyltetrahydrofolate + H2O = (6R)-10-formyltetrahydrofolate + H(+). Its pathway is one-carbon metabolism; tetrahydrofolate interconversion. In terms of biological role, catalyzes the oxidation of 5,10-methylenetetrahydrofolate to 5,10-methenyltetrahydrofolate and then the hydrolysis of 5,10-methenyltetrahydrofolate to 10-formyltetrahydrofolate. The sequence is that of Bifunctional protein FolD from Hahella chejuensis (strain KCTC 2396).